The primary structure comprises 130 residues: Small ribosomal subunit protein uS11c (130 aa).

It belongs to the universal ribosomal protein uS11 family. As to quaternary structure, part of the 30S ribosomal subunit.

The protein resides in the plastid. The protein localises to the chloroplast. The polypeptide is Small ribosomal subunit protein uS11c (Chara vulgaris (Common stonewort)).